The following is a 222-amino-acid chain: Lipid transferase CIDEC (222 aa).

Residues 1–19 (MAMYTAVSTSVVTQQQLSE) are compositionally biased toward polar residues. Disordered stretches follow at residues 1-33 (MAMY…CRVT) and 203-222 (EQPP…KMLQ). Positions 1-33 (MAMYTAVSTSVVTQQQLSEPSAEAPRARPCRVT) are required for liquid-liquid phase separation (LLPS). One can recognise a CIDE-N domain in the interval 26-103 (RARPCRVTTA…VLHKGQKWQP (78 aa)).

It belongs to the CIDE family. Homodimer. Homooligomer; undergoes liquid-liquid phase separation (LLPS) via its N-terminus, facilitating lipid droplet fusion, occurs at the lipid droplet contact sites. Interacts with CIDEA. Interacts with PLIN1. Interacts with NFAT5; this interaction is direct and retains NFAT5 in the cytoplasm. Interacts with CEBPB. Interacts with isoform CLSTN3beta of CLSTN3; inhibiting the lipid transferase activity of CIDEC. Post-translationally, ubiquitinated and targeted to proteasomal degradation, resulting in a short half-life (about 15 minutes in 3T3-L1 cells). Protein stability depends on triaclyglycerol synthesis, fatty acid availability and lipid droplet formation.

Its subcellular location is the lipid droplet. It is found in the endoplasmic reticulum. The protein resides in the nucleus. The catalysed reaction is a triacyl-sn-glycerol(in) = a triacyl-sn-glycerol(out). Its function is as follows. Lipid transferase specifically expressed in white adipose tissue, which promotes unilocular lipid droplet formation by mediating lipid droplet fusion. Lipid droplet fusion promotes their enlargement, restricting lipolysis and favoring lipid storage. Localizes on the lipid droplet surface, at focal contact sites between lipid droplets, and mediates atypical lipid droplet fusion by undergoing liquid-liquid phase separation (LLPS) and promoting directional net neutral lipid transfer from the smaller to larger lipid droplets. The transfer direction may be driven by the internal pressure difference between the contacting lipid droplet pair. Its role in neutral lipid transfer and lipid droplet enlargement is activated by the interaction with PLIN1. May also act as a CEBPB coactivator in the white adipose tissue to control the expression of a subset of CEBPB downstream target genes, including SOCS1, SOCS3, TGFB1, TGFBR1, ID2 and XDH. When overexpressed in preadipocytes, induces apoptosis or increases cell susceptibility to apoptosis induced by serum deprivation or TGFB treatment. The protein is Lipid transferase CIDEC of Bos taurus (Bovine).